Consider the following 198-residue polypeptide: Protein GrpE (198 aa).

Belongs to the GrpE family. In terms of assembly, homodimer.

It is found in the cytoplasm. In terms of biological role, participates actively in the response to hyperosmotic and heat shock by preventing the aggregation of stress-denatured proteins, in association with DnaK and GrpE. It is the nucleotide exchange factor for DnaK and may function as a thermosensor. Unfolded proteins bind initially to DnaJ; upon interaction with the DnaJ-bound protein, DnaK hydrolyzes its bound ATP, resulting in the formation of a stable complex. GrpE releases ADP from DnaK; ATP binding to DnaK triggers the release of the substrate protein, thus completing the reaction cycle. Several rounds of ATP-dependent interactions between DnaJ, DnaK and GrpE are required for fully efficient folding. This Actinobacillus pleuropneumoniae serotype 3 (strain JL03) protein is Protein GrpE.